The primary structure comprises 127 residues: UPF0325 protein VP2321 (127 aa).

Belongs to the UPF0325 family.

The sequence is that of UPF0325 protein VP2321 from Vibrio parahaemolyticus serotype O3:K6 (strain RIMD 2210633).